A 525-amino-acid polypeptide reads, in one-letter code: uncharacterized protein (525 aa).

An N-terminal signal peptide occupies residues 1-21 (MLECLSALLVLFAGGGGSVLA). Residues 22–448 (AVQSKTVADP…ISAASQLDER (427 aa)) are Extracellular-facing. Residues 242-264 (KVSSENCSKDTDDKSGSKKERNT) are disordered. The chain crosses the membrane as a helical span at residues 449 to 469 (IFIFTAITVSITTLMMLGFSY). Residues 470-525 (RSRVSFRDHSIDDSDDDNDWSDDEVEFDEEYFYSLPVSIPEKGISLDKMAQQLGVE) lie on the Cytoplasmic side of the membrane.

It is found in the membrane. This is an uncharacterized protein from Saccharomyces cerevisiae (strain RM11-1a) (Baker's yeast).